Here is a 39-residue protein sequence, read N- to C-terminus: Photosystem II reaction center protein X (39 aa).

The helical transmembrane segment at W10 to I30 threads the bilayer.

This sequence belongs to the PsbX family. Type 1 subfamily. As to quaternary structure, PSII is composed of 1 copy each of membrane proteins PsbA, PsbB, PsbC, PsbD, PsbE, PsbF, PsbH, PsbI, PsbJ, PsbK, PsbL, PsbM, PsbT, PsbX, PsbY, PsbZ, Psb30/Ycf12, peripheral proteins PsbO, CyanoQ (PsbQ), PsbU, PsbV and a large number of cofactors. It forms dimeric complexes.

It localises to the cellular thylakoid membrane. In terms of biological role, involved in the binding and/or turnover of quinones at the Q(B) site of photosystem II (PSII). PSII is a light-driven water plastoquinone oxidoreductase, using light energy to abstract electrons from H(2)O, generating a proton gradient subsequently used for ATP formation. This chain is Photosystem II reaction center protein X, found in Nostoc punctiforme (strain ATCC 29133 / PCC 73102).